A 319-amino-acid polypeptide reads, in one-letter code: Putative replication factor C small subunit R395 (319 aa).

45–52 (GSPGVGKT) contributes to the ATP binding site.

The protein belongs to the activator 1 small subunits family. RfcS subfamily.

Part of the RFC clamp loader complex which loads the PCNA sliding clamp onto DNA. In Acanthamoeba polyphaga mimivirus (APMV), this protein is Putative replication factor C small subunit R395.